A 260-amino-acid polypeptide reads, in one-letter code: Dynein regulatory complex subunit 6 (260 aa).

The span at 1 to 13 (MAPKKKGGGKKKK) shows a compositional bias: basic residues. The segment at 1 to 43 (MAPKKKGGGKKKKKDDGAEPPHDGSWERAVESGTWEKPVTDLP) is disordered. Residues 14-30 (KDDGAEPPHDGSWERAV) are compositionally biased toward basic and acidic residues.

It belongs to the DRC6 family. As to quaternary structure, component of the nexin-dynein regulatory complex (N-DRC).

The protein resides in the cytoplasm. The protein localises to the cytoskeleton. It is found in the flagellum axoneme. Component of the nexin-dynein regulatory complex (N-DRC), a key regulator of ciliary/flagellar motility which maintains the alignment and integrity of the distal axoneme and regulates microtubule sliding in motile axonemes. The polypeptide is Dynein regulatory complex subunit 6 (Chlamydomonas reinhardtii (Chlamydomonas smithii)).